Consider the following 141-residue polypeptide: Large ribosomal subunit protein uL13 (141 aa).

The protein belongs to the universal ribosomal protein uL13 family. In terms of assembly, part of the 50S ribosomal subunit.

Its function is as follows. This protein is one of the early assembly proteins of the 50S ribosomal subunit, although it is not seen to bind rRNA by itself. It is important during the early stages of 50S assembly. In Sulfurovum sp. (strain NBC37-1), this protein is Large ribosomal subunit protein uL13.